Here is a 330-residue protein sequence, read N- to C-terminus: MQTLAQHLTSQAVNDSLSQLILTLADTSKAISHAVRHGALAGVLGATEQENVQGETQKKLDIITNDMLKDALKADGTVRGLASEEEDHVVEVSTNGQYLVCFDPLDGSSNIDINSLVGTIFSILPASAGELTETSFLQSGRNQLAAGYVLYGPSTMLALTTGQGVQLFTLHPETNEFLLTNAAMSISADTQEFAINMSNQRFWEAPMQTYIADLLLGKIGPREKSFNMRWIAAMVGDVHRVLSRGGIFTYPTDNKDPKKPYKLRLMYEANPMAFLVEQAGGKASTGYETILDIQPTHIHQRVAVILGSANEVDACLSYHGLDYSEEPGLD.

Positions 84, 103, 105, and 106 each coordinate Mg(2+). Residues 106–109 (DGSS), N196, and K262 each bind substrate. E268 is a Mg(2+) binding site.

This sequence belongs to the FBPase class 1 family. As to quaternary structure, homotetramer. It depends on Mg(2+) as a cofactor.

Its subcellular location is the cytoplasm. The enzyme catalyses beta-D-fructose 1,6-bisphosphate + H2O = beta-D-fructose 6-phosphate + phosphate. It functions in the pathway carbohydrate biosynthesis; gluconeogenesis. The chain is Fructose-1,6-bisphosphatase class 1 from Shewanella sp. (strain W3-18-1).